Consider the following 115-residue polypeptide: NADH-ubiquinone oxidoreductase chain 3 (115 aa).

The next 3 membrane-spanning stretches (helical) occupy residues Met-4 to Leu-24, Phe-55 to Leu-75, and Met-84 to Tyr-104.

This sequence belongs to the complex I subunit 3 family. In terms of assembly, core subunit of respiratory chain NADH dehydrogenase (Complex I) which is composed of 45 different subunits. Interacts with TMEM186. Interacts with TMEM242.

The protein localises to the mitochondrion inner membrane. The catalysed reaction is a ubiquinone + NADH + 5 H(+)(in) = a ubiquinol + NAD(+) + 4 H(+)(out). Functionally, core subunit of the mitochondrial membrane respiratory chain NADH dehydrogenase (Complex I) which catalyzes electron transfer from NADH through the respiratory chain, using ubiquinone as an electron acceptor. Essential for the catalytic activity of complex I. The polypeptide is NADH-ubiquinone oxidoreductase chain 3 (Reithrodon auritus (Bunny rat)).